A 200-amino-acid polypeptide reads, in one-letter code: Ankyrin repeat-containing protein YAR1 (200 aa).

2 ANK repeats span residues 49-78 (SDST…RANS) and 92-121 (TGNT…ADPF). At Ser78 the chain carries Phosphoserine. The disordered stretch occupies residues 152–173 (VEPEDDEEDTQTEGKNSVQITK). A compositionally biased stretch (acidic residues) spans 153–162 (EPEDDEEDTQ). Residues 164–173 (EGKNSVQITK) are compositionally biased toward polar residues.

Required for normal rate of cell proliferation. This chain is Ankyrin repeat-containing protein YAR1 (YAR1), found in Saccharomyces cerevisiae (strain ATCC 204508 / S288c) (Baker's yeast).